The sequence spans 283 residues: Octanoyl-[GcvH]:protein N-octanoyltransferase (283 aa).

The region spanning Gly-42 to Tyr-248 is the BPL/LPL catalytic domain. The Acyl-thioester intermediate role is filled by Cys-147.

Belongs to the octanoyltransferase LipL family.

The catalysed reaction is N(6)-octanoyl-L-lysyl-[glycine-cleavage complex H protein] + L-lysyl-[lipoyl-carrier protein] = N(6)-octanoyl-L-lysyl-[lipoyl-carrier protein] + L-lysyl-[glycine-cleavage complex H protein]. It participates in protein modification; protein lipoylation via endogenous pathway; protein N(6)-(lipoyl)lysine from octanoyl-[acyl-carrier-protein]. Catalyzes the amidotransfer (transamidation) of the octanoyl moiety from octanoyl-GcvH to the lipoyl domain of the E2 subunit of lipoate-dependent enzymes. The sequence is that of Octanoyl-[GcvH]:protein N-octanoyltransferase from Geobacillus kaustophilus (strain HTA426).